A 495-amino-acid polypeptide reads, in one-letter code: ATP synthase subunit beta, chloroplastic (495 aa).

An ATP-binding site is contributed by 172–179 (GGAGVGKT).

The protein belongs to the ATPase alpha/beta chains family. As to quaternary structure, F-type ATPases have 2 components, CF(1) - the catalytic core - and CF(0) - the membrane proton channel. CF(1) has five subunits: alpha(3), beta(3), gamma(1), delta(1), epsilon(1). CF(0) has four main subunits: a(1), b(1), b'(1) and c(9-12).

Its subcellular location is the plastid. The protein resides in the chloroplast thylakoid membrane. It carries out the reaction ATP + H2O + 4 H(+)(in) = ADP + phosphate + 5 H(+)(out). Its function is as follows. Produces ATP from ADP in the presence of a proton gradient across the membrane. The catalytic sites are hosted primarily by the beta subunits. In Eucomis bicolor (King's flower), this protein is ATP synthase subunit beta, chloroplastic.